The primary structure comprises 870 residues: Protein translocase subunit SecA (870 aa).

ATP-binding positions include glutamine 86, 104–108 (GEGKT), and aspartate 499. Zn(2+) contacts are provided by cysteine 854, cysteine 856, cysteine 865, and histidine 866.

This sequence belongs to the SecA family. In terms of assembly, monomer and homodimer. Part of the essential Sec protein translocation apparatus which comprises SecA, SecYEG and auxiliary proteins SecDF-YajC and YidC. Zn(2+) serves as cofactor.

The protein localises to the cell inner membrane. It is found in the cytoplasm. The catalysed reaction is ATP + H2O + cellular proteinSide 1 = ADP + phosphate + cellular proteinSide 2.. Functionally, part of the Sec protein translocase complex. Interacts with the SecYEG preprotein conducting channel. Has a central role in coupling the hydrolysis of ATP to the transfer of proteins into and across the cell membrane, serving both as a receptor for the preprotein-SecB complex and as an ATP-driven molecular motor driving the stepwise translocation of polypeptide chains across the membrane. The sequence is that of Protein translocase subunit SecA from Ehrlichia ruminantium (strain Welgevonden).